The sequence spans 402 residues: Arginine biosynthesis bifunctional protein ArgJ (402 aa).

Residues T152, K178, T189, E275, N397, and T402 each contribute to the substrate site. T189 acts as the Nucleophile in catalysis.

This sequence belongs to the ArgJ family. In terms of assembly, heterotetramer of two alpha and two beta chains.

It localises to the cytoplasm. The enzyme catalyses N(2)-acetyl-L-ornithine + L-glutamate = N-acetyl-L-glutamate + L-ornithine. It catalyses the reaction L-glutamate + acetyl-CoA = N-acetyl-L-glutamate + CoA + H(+). It functions in the pathway amino-acid biosynthesis; L-arginine biosynthesis; L-ornithine and N-acetyl-L-glutamate from L-glutamate and N(2)-acetyl-L-ornithine (cyclic): step 1/1. It participates in amino-acid biosynthesis; L-arginine biosynthesis; N(2)-acetyl-L-ornithine from L-glutamate: step 1/4. Its function is as follows. Catalyzes two activities which are involved in the cyclic version of arginine biosynthesis: the synthesis of N-acetylglutamate from glutamate and acetyl-CoA as the acetyl donor, and of ornithine by transacetylation between N(2)-acetylornithine and glutamate. In Symbiobacterium thermophilum (strain DSM 24528 / JCM 14929 / IAM 14863 / T), this protein is Arginine biosynthesis bifunctional protein ArgJ.